The chain runs to 179 residues: Large ribosomal subunit protein uL6 (179 aa).

It belongs to the universal ribosomal protein uL6 family. Part of the 50S ribosomal subunit.

Its function is as follows. This protein binds to the 23S rRNA, and is important in its secondary structure. It is located near the subunit interface in the base of the L7/L12 stalk, and near the tRNA binding site of the peptidyltransferase center. The protein is Large ribosomal subunit protein uL6 of Syntrophotalea carbinolica (strain DSM 2380 / NBRC 103641 / GraBd1) (Pelobacter carbinolicus).